Reading from the N-terminus, the 313-residue chain is MVFHHIPVLLHQVLEVLKPRPEGVYLDGTVGGGGHSAAILQKLSGRGRVIGLDQDPAALAAAGRKLASFGDRVTLVRSNFRHIGAVVAELGLTGKIDGILLDIGVSSHQLDEAERGFTYRMDAPLDMRMNPESALTASKLLNEAPEGEIARILRDYGEERWAKRIAQFIVKRRALQPLERTGELVDIIRAAIPAAARQEGGHPAKRTFQALRIAVNDELGALEEALPAALEALAPGGRLAVISFHSLEDRIVKSFFAEQARGCLCPPDFPVCACGNRPKVKIITKKPLVGSDEEMRANPRAQSAKLRAAEKIR.

Residues 33 to 35 (GGH), Asp-53, Phe-80, Asp-102, and Gln-109 contribute to the S-adenosyl-L-methionine site. The disordered stretch occupies residues 291 to 313 (SDEEMRANPRAQSAKLRAAEKIR).

It belongs to the methyltransferase superfamily. RsmH family.

Its subcellular location is the cytoplasm. It catalyses the reaction cytidine(1402) in 16S rRNA + S-adenosyl-L-methionine = N(4)-methylcytidine(1402) in 16S rRNA + S-adenosyl-L-homocysteine + H(+). Specifically methylates the N4 position of cytidine in position 1402 (C1402) of 16S rRNA. This is Ribosomal RNA small subunit methyltransferase H from Heliobacterium modesticaldum (strain ATCC 51547 / Ice1).